Here is a 129-residue protein sequence, read N- to C-terminus: M-zodatoxin-Lt8k (129 aa).

Residues 1–20 (MKYFVVALALVAAFACIAES) form the signal peptide. Residues 21–60 (KPAESEHELAEVEEENELADLEDAVWLEHLADLSDLEEAR) constitute a propeptide that is removed on maturation.

The protein belongs to the cationic peptide 06 (cytoinsectotoxin) family. As to expression, expressed by the venom gland.

It is found in the secreted. Insecticidal, cytolytic and antimicrobial peptide. Forms voltage-dependent, ion-permeable channels in membranes. At high concentration causes cell membrane lysis. The polypeptide is M-zodatoxin-Lt8k (cit 1-10) (Lachesana tarabaevi (Spider)).